Consider the following 308-residue polypeptide: Putative S-adenosyl-L-methionine-dependent methyltransferase MAB_4584c (308 aa).

S-adenosyl-L-methionine is bound by residues Asp-131 and Asp-160 to Leu-161.

It belongs to the UPF0677 family.

Functionally, exhibits S-adenosyl-L-methionine-dependent methyltransferase activity. The sequence is that of Putative S-adenosyl-L-methionine-dependent methyltransferase MAB_4584c from Mycobacteroides abscessus (strain ATCC 19977 / DSM 44196 / CCUG 20993 / CIP 104536 / JCM 13569 / NCTC 13031 / TMC 1543 / L948) (Mycobacterium abscessus).